Here is a 551-residue protein sequence, read N- to C-terminus: Membrane protein insertase YidC (551 aa).

Residues 3–23 (ANHIRILLLVTIAIMFISLMG) form a helical membrane-spanning segment. Over residues 33–47 (NTKQQTSATQNNSHY) the composition is skewed to polar residues. The disordered stretch occupies residues 33–58 (NTKQQTSATQNNSHYDNADSSTNTDV). 3 helical membrane passes run 361-381 (LVGNWGLAIILVTCLIKLIFY), 431-451 (LSGCLPMLIQIPIFISLYWVL), and 504-524 (VMMFLPVIFTFLFASFPSGLV).

It belongs to the OXA1/ALB3/YidC family. Type 1 subfamily. As to quaternary structure, interacts with the Sec translocase complex via SecD. Specifically interacts with transmembrane segments of nascent integral membrane proteins during membrane integration.

It localises to the cell inner membrane. Functionally, required for the insertion and/or proper folding and/or complex formation of integral membrane proteins into the membrane. Involved in integration of membrane proteins that insert both dependently and independently of the Sec translocase complex, as well as at least some lipoproteins. Aids folding of multispanning membrane proteins. This Francisella tularensis subsp. novicida (strain U112) protein is Membrane protein insertase YidC.